The sequence spans 135 residues: ATP synthase epsilon chain, chloroplastic (135 aa).

Belongs to the ATPase epsilon chain family. F-type ATPases have 2 components, CF(1) - the catalytic core - and CF(0) - the membrane proton channel. CF(1) has five subunits: alpha(3), beta(3), gamma(1), delta(1), epsilon(1). CF(0) has three main subunits: a, b and c.

It is found in the plastid. It localises to the chloroplast thylakoid membrane. Its function is as follows. Produces ATP from ADP in the presence of a proton gradient across the membrane. This Stigeoclonium helveticum (Green alga) protein is ATP synthase epsilon chain, chloroplastic.